A 303-amino-acid polypeptide reads, in one-letter code: Mycothiol acetyltransferase (303 aa).

2 N-acetyltransferase domains span residues 4–141 (ITVR…RSLA) and 154–303 (IVLR…ANGA). Position 38 (Glu-38) interacts with 1D-myo-inositol 2-(L-cysteinylamino)-2-deoxy-alpha-D-glucopyranoside. Residue 80–82 (AAV) coordinates acetyl-CoA. Residues Glu-181, Lys-223, and Glu-234 each coordinate 1D-myo-inositol 2-(L-cysteinylamino)-2-deoxy-alpha-D-glucopyranoside. Residues 238–240 (VGI) and 245–251 (QGRGLGR) contribute to the acetyl-CoA site. 1D-myo-inositol 2-(L-cysteinylamino)-2-deoxy-alpha-D-glucopyranoside is bound at residue Tyr-272. Residue 277–282 (NTAAVN) participates in acetyl-CoA binding.

This sequence belongs to the acetyltransferase family. MshD subfamily. In terms of assembly, monomer.

It catalyses the reaction 1D-myo-inositol 2-(L-cysteinylamino)-2-deoxy-alpha-D-glucopyranoside + acetyl-CoA = mycothiol + CoA + H(+). Functionally, catalyzes the transfer of acetyl from acetyl-CoA to desacetylmycothiol (Cys-GlcN-Ins) to form mycothiol. The sequence is that of Mycothiol acetyltransferase from Nocardia farcinica (strain IFM 10152).